A 100-amino-acid chain; its full sequence is Small ribosomal subunit protein uS14 (100 aa).

The protein belongs to the universal ribosomal protein uS14 family. Part of the 30S ribosomal subunit. Contacts proteins S3 and S10.

Its function is as follows. Binds 16S rRNA, required for the assembly of 30S particles and may also be responsible for determining the conformation of the 16S rRNA at the A site. In Thermosynechococcus vestitus (strain NIES-2133 / IAM M-273 / BP-1), this protein is Small ribosomal subunit protein uS14.